The following is a 328-amino-acid chain: Reticulocalbin-3 (328 aa).

Positions Met1–Gly20 are cleaved as a signal peptide. The interval Pro24–Ala48 is disordered. 6 consecutive EF-hand domains span residues Gln77 to Arg112, His113 to Pro148, Lys163 to Pro198, Met200 to Gly235, Trp241 to Asp276, and Gln277 to Ser312. Asp92, Asp94, Trp96, Glu101, Asp126, Asp128, Asp130, Arg132, and Glu137 together coordinate Ca(2+). Asn140 is a glycosylation site (N-linked (GlcNAc...) asparagine). Ca(2+) is bound by residues Asp176, Asp178, Asp180, Met182, Glu187, Asp213, Asn215, Asp217, Tyr219, Glu224, Asp254, Asn256, Asp258, Arg260, Glu265, Asp290, Asp292, Asp294, Arg296, and Glu301. Positions His325–Leu328 match the Prevents secretion from ER motif.

The protein belongs to the CREC family. Interacts with PCSK6 (immature form including the propeptide); probably involved in the maturation and the secretion of PCSK6. In terms of processing, degraded by PCSK6 and other endoproteases including FURIN and PCSK5. N-glycosylated. Highly expressed in lung and heart. Also detected in liver, spleen, kidney, skeletal muscle, intestine, stomach, and brain.

Its subcellular location is the endoplasmic reticulum lumen. Probable molecular chaperone assisting protein biosynthesis and transport in the endoplasmic reticulum. Required for the proper biosynthesis and transport of pulmonary surfactant-associated protein A/SP-A, pulmonary surfactant-associated protein D/SP-D and the lipid transporter ABCA3. By regulating both the proper expression and the degradation through the endoplasmic reticulum-associated protein degradation pathway of these proteins plays a crucial role in pulmonary surfactant homeostasis. Has an anti-fibrotic activity by negatively regulating the secretion of type I and type III collagens. This calcium-binding protein also transiently associates with immature PCSK6 and regulates its secretion. The chain is Reticulocalbin-3 from Mus musculus (Mouse).